Reading from the N-terminus, the 282-residue chain is Putative hydrolase BamMC406_5393 (282 aa).

3 residues coordinate Mg(2+): glutamate 124, glutamate 126, and aspartate 155.

This sequence belongs to the FAH family. The cofactor is Mg(2+).

The polypeptide is Putative hydrolase BamMC406_5393 (Burkholderia ambifaria (strain MC40-6)).